The chain runs to 284 residues: Alpha-S1-casein (284 aa).

Residues 1–15 (MKLLILTCLVAAALA) form the signal peptide. Disordered regions lie at residues 21 to 44 (RRNA…IVKQ) and 78 to 111 (SSAE…SATE). Composition is skewed to low complexity over residues 24–36 (AVSS…NSSS) and 78–99 (SSAE…SSSS). Ser-79, Ser-93, Ser-94, Ser-95, Ser-96, Ser-97, Ser-98, and Ser-99 each carry phosphoserine. 10 repeat units span residues 138-143 (LLQQAS), 144-149 (LAQQAS), 150-155 (LAQQAS), 156-161 (LAQQAL), 162-167 (LAQQPS), 168-173 (LAQQAA), 174-179 (LAQQAS), 180-185 (LAQQAS), 186-191 (LAQQAS), and 192-197 (LAQKHH). Residues 138–197 (LLQQASLAQQASLAQQASLAQQALLAQQPSLAQQAALAQQASLAQQASLAQQASLAQKHH) form a 10 X 6 AA tandem repeats region.

The protein belongs to the alpha-casein family. In terms of tissue distribution, mammary gland specific. Secreted in milk.

The protein resides in the secreted. Its function is as follows. Important role in the capacity of milk to transport calcium phosphate. The chain is Alpha-S1-casein (Csn1s1) from Rattus norvegicus (Rat).